Reading from the N-terminus, the 381-residue chain is Periphilin-1 (381 aa).

Basic and acidic residues-rich tracts occupy residues 1–28, 39–65, and 79–121; these read MWSE…DGYH, PLLD…GYSR, and RSFS…DGFR. Disordered regions lie at residues 1–65 and 79–260; these read MWSE…GYSR and RSFS…KSDE. A Nuclear localization signal motif is present at residues 117 to 123; sequence RDGFRRK. Lysine 123 is covalently cross-linked (Glycyl lysine isopeptide (Lys-Gly) (interchain with G-Cter in SUMO2)). Residues serine 124, serine 128, serine 147, and serine 154 each carry the phosphoserine modification. A compositionally biased stretch (basic and acidic residues) spans 130 to 156; that stretch reads YSRDRSPHKRDAPFFRESPVGRKDSPH. Positions 157 to 168 are enriched in low complexity; that stretch reads SRSGSSVSSRSY. Positions 175-187 are enriched in basic residues; it reads THSFHQSQHRKSS. Serine 181 is modified (phosphoserine). Lysine 194 is covalently cross-linked (Glycyl lysine isopeptide (Lys-Gly) (interchain with G-Cter in SUMO2)). Basic and acidic residues predominate over residues 195–208; the sequence is RQNEAIRGRGKERS. Serine 211 carries the phosphoserine modification. Lysine 213 is covalently cross-linked (Glycyl lysine isopeptide (Lys-Gly) (interchain with G-Cter in SUMO2)). Phosphoserine occurs at positions 215 and 219. Over residues 217 to 230 the composition is skewed to low complexity; it reads DASPSSSSAVASSK. Positions 231–260 are enriched in basic and acidic residues; sequence ALDKPSRLTEKELAEAESKWANETLEKSDE. Lysine 241 is covalently cross-linked (Glycyl lysine isopeptide (Lys-Gly) (interchain with G-Cter in SUMO2)). Lysine 249 is modified (N6-acetyllysine; alternate). A Glycyl lysine isopeptide (Lys-Gly) (interchain with G-Cter in SUMO2); alternate cross-link involves residue lysine 249. A Phosphoserine modification is found at serine 339. Lysine 342 participates in a covalent cross-link: Glycyl lysine isopeptide (Lys-Gly) (interchain with G-Cter in SUMO2).

In terms of assembly, homodimer. Component of the HUSH complex; at least composed of TASOR, PPHLN1 and MPHOSPH8. Interacts with SIN3A and HDAC1. May interact with PPL. In terms of tissue distribution, ubiquitously expressed. Strong expression in the developing somites and limbs, the embryonic nervous system and the adult brain.

The protein localises to the nucleus. Its subcellular location is the cytoplasm. It is found in the chromosome. Component of the HUSH complex, a multiprotein complex that mediates epigenetic repression. The HUSH complex is recruited to genomic loci rich in H3K9me3 and is probably required to maintain transcriptional silencing by promoting recruitment of SETDB1, a histone methyltransferase that mediates further deposition of H3K9me3. In the HUSH complex, contributes to the maintenance of the complex at chromatin. Acts as a transcriptional corepressor and regulates the cell cycle, probably via the HUSH complex. The HUSH complex is also involved in the silencing of unintegrated retroviral DNA: some part of the retroviral DNA formed immediately after infection remains unintegrated in the host genome and is transcriptionally repressed. May be involved in epithelial differentiation by contributing to epidermal integrity and barrier formation. The polypeptide is Periphilin-1 (Mus musculus (Mouse)).